The primary structure comprises 341 residues: N-(sulfonatooxy)alkenimidothioic acid sulfate-lyase (epithionitrile-forming) (341 aa).

The tract at residues 1-24 (MAPTLQGQWIKVGQKGGTGPGPRS) is disordered. Kelch repeat units follow at residues 34-82 (KLYS…VRMV), 87-133 (KIYI…FHSM), 139-194 (HVYV…VVQG), and 203-249 (ATSI…AHAV). Residues Lys46, Arg94, Thr129, Phe130, Arg157, Gly186, Lys211, and Val244 each contribute to the a (Z)-N-(sulfonatooxy)alkanimidothioate site. Residue Arg94 is the Proton donor of the active site. The active-site Proton donor is the Arg157. Fe(2+) is bound by residues Glu260, Asp264, and His268. Position 303 (Trp303) interacts with a (Z)-N-(sulfonatooxy)alkanimidothioate.

As to quaternary structure, homodimer. Interacts with WRKY53. It depends on Fe(2+) as a cofactor. As to expression, expressed in epidermal cells of all above-ground organs except the anthers, in cambial cells of leaf and stem vascular bundles, and in glucosinolates rich S-cells found in stems just below the inflorescence. Absent from roots.

The protein resides in the cytoplasm. It localises to the nucleus. It carries out the reaction a (Z)-N-(sulfonatooxy)alkenimidothioate = an epithionitrile + sulfate. The catalysed reaction is a (Z)-N-(sulfonatooxy)alkanimidothioate = a nitrile + sulfur + sulfate. The enzyme catalyses (Z)-(indol-3-yl)-N-(sulfonatooxy)methanimidothioate = (indol-3-yl)acetonitrile + sulfur + sulfate. Its activity is regulated as follows. Not dependent on the presence of Fe(2+) although supplemental Fe(2+) increases nitriles formation. Specifier protein that contributes to constitutive and herbivore-induced simple nitrile formation. Converts glucosinolates both to epithionitriles and to simple nitriles in the presence of myrosinase. Promotes the formation of epithionitriles after hydrolysis of alkenylglucosinolates containing a terminal double bond. Mediates indol-3-ylacetonitrile (IACN) production from indol-3-ylmethylglucosinolate (glucobrassicin). Triggers the production of 3,4-epithiobutylnitrile from 2-propenylisothiocyanate, product of 2-propenylglucosinolate (sinigrin) catalysis by myrosinase. Seems inactive toward benzylglucosinolate (glucotropaeolin). Acts as a negative regulator of senescence. This is N-(sulfonatooxy)alkenimidothioic acid sulfate-lyase (epithionitrile-forming) from Arabidopsis thaliana (Mouse-ear cress).